Consider the following 168-residue polypeptide: Crossover junction endodeoxyribonuclease RuvC (168 aa).

Active-site residues include Asp7, Glu67, and His139. Asp7, Glu67, and His139 together coordinate Mg(2+).

The protein belongs to the RuvC family. Homodimer which binds Holliday junction (HJ) DNA. The HJ becomes 2-fold symmetrical on binding to RuvC with unstacked arms; it has a different conformation from HJ DNA in complex with RuvA. In the full resolvosome a probable DNA-RuvA(4)-RuvB(12)-RuvC(2) complex forms which resolves the HJ. Requires Mg(2+) as cofactor.

The protein localises to the cytoplasm. It catalyses the reaction Endonucleolytic cleavage at a junction such as a reciprocal single-stranded crossover between two homologous DNA duplexes (Holliday junction).. Functionally, the RuvA-RuvB-RuvC complex processes Holliday junction (HJ) DNA during genetic recombination and DNA repair. Endonuclease that resolves HJ intermediates. Cleaves cruciform DNA by making single-stranded nicks across the HJ at symmetrical positions within the homologous arms, yielding a 5'-phosphate and a 3'-hydroxyl group; requires a central core of homology in the junction. The consensus cleavage sequence is 5'-(A/T)TT(C/G)-3'. Cleavage occurs on the 3'-side of the TT dinucleotide at the point of strand exchange. HJ branch migration catalyzed by RuvA-RuvB allows RuvC to scan DNA until it finds its consensus sequence, where it cleaves and resolves the cruciform DNA. This is Crossover junction endodeoxyribonuclease RuvC from Deinococcus geothermalis (strain DSM 11300 / CIP 105573 / AG-3a).